The sequence spans 230 residues: Esterase OVCA2 (230 aa).

Catalysis depends on charge relay system residues S124, D182, and H209.

This sequence belongs to the LovG family.

It carries out the reaction a carboxylic ester + H2O = an alcohol + a carboxylate + H(+). Functionally, exhibits ester hydrolase activity with a strong preference for long-chain alkyl ester substrates and high selectivity against a variety of short, branched, and substituted esters. Is able to hydrolyze ester bonds within a wide range of p-nitrophenyl derivatives (C2-C14) in vitro, with a strong preference toward substrates of &gt;8 carbons. This chain is Esterase OVCA2 (ovca2), found in Xenopus tropicalis (Western clawed frog).